An 828-amino-acid polypeptide reads, in one-letter code: MQCCNQLSPHEQRLQDKIEGKVDRYRATHERVFTILESFDNTRPRIDVERAKYFTESMKATEGQPLPLRWAKALMHIAENMTVYIDDHQLICGRAGYQGRYGVLYPELDGDFLGTAIEDLPNRAESPFAITPEDARVVVEEIAPFWKGKTYHEALNLALPADVHKLTYDDPQGLMSRFIVNETSSFRSSIQWVHDYEKVLKRGFRSIKEEALEKIAALDPMSPCDNVEKRPFLEAIVIVCDAIILWAKRHAKLAAELAAKETDPTRKRELETMAEICAWVPENPARTFHEAVQAQWFTQVFSRIEQKTGTIVSNGRMDQYFWPFYEKDLAEGRITEDSALELLECMWVGMAQYVDLYISPTGGAFNEGYAHWEAVTIGGQTPEGRDATNDLTYLFLKSKREFPLHYPDLAARIHSRSPERYLWEVAETIKDGSGFPKLINDEEVVPLYVSKGATFAEALDYAVSGCTEARMPNRDTYTSGGAYINFAAALEMVLYNGKMLKYGDTDLGAHTGDPCEFKTWEEFWNAYVTQHHLFLKTAFVQQHIINNLRARHFAQPMGSSLHDLCMKHCLDLHTPQIPEGINLGYFEYMGFGTVVDSLSAIKKLVFEDKKLTMGELIEALKCNFEGKEDIQQLLKSAPCYGNNDDYADSIARDIDALSVKYGRRYSPELGMHNDVRYVPFTSHVPFGRVVSATPNGRKAWSALSDGSSASHGADVNGPTAILQSNFNSKNYGMRDRAARMLNIKFTPKCVEGEEGSQKLVSFIRTFCDLKLWHVQFNVINKETLLAAQRDPEKYRNLIVRIAGYSAYFVDLSPDLQNDLIARTGHDVM.

In terms of domain architecture, PFL spans 30-698; the sequence is ERVFTILESF…VVSATPNGRK (669 aa). 2-hydroxyethane-1-sulfonate is bound by residues R187, Q191, 466–468, and R676; that span reads CTE. The active-site Cysteine radical intermediate is C466. Residue E468 is the Proton acceptor of the active site. The region spanning 705–828 is the Glycine radical domain; that stretch reads DGSSASHGAD…LIARTGHDVM (124 aa). G803 is subject to Glycine radical.

This sequence belongs to the glycyl radical enzyme (GRE) family. Homodimer. Requires the activating protein IseH to generate the key active site glycyl radical on Gly-803 that is involved in catalysis.

It catalyses the reaction 2-hydroxyethane-1-sulfonate = acetaldehyde + sulfite + H(+). It participates in organosulfur degradation; alkanesulfonate degradation. In terms of biological role, involved in an anaerobic respiration pathway that converts the sulfonate isethionate (2-hydroxyethanesulfonate) to ammonia, acetate and sulfide. Catalyzes the radical-mediated C-S bond cleavage of isethionate (2-hydroxyethanesulfonate) to form sulfite and acetaldehyde. Shows no activity with taurine or ethanolamine as substrates. The sequence is that of Isethionate sulfite-lyase from Nitratidesulfovibrio vulgaris (strain ATCC 29579 / DSM 644 / CCUG 34227 / NCIMB 8303 / VKM B-1760 / Hildenborough) (Desulfovibrio vulgaris).